Consider the following 209-residue polypeptide: Uracil phosphoribosyltransferase (209 aa).

5-phospho-alpha-D-ribose 1-diphosphate-binding positions include R79, R104, and 131–139; that span reads DPMLATGGS. Residues I194 and 199 to 201 each bind uracil; that span reads GDA. D200 contacts 5-phospho-alpha-D-ribose 1-diphosphate.

The protein belongs to the UPRTase family. Mg(2+) is required as a cofactor.

The enzyme catalyses UMP + diphosphate = 5-phospho-alpha-D-ribose 1-diphosphate + uracil. The protein operates within pyrimidine metabolism; UMP biosynthesis via salvage pathway; UMP from uracil: step 1/1. With respect to regulation, allosterically activated by GTP. Catalyzes the conversion of uracil and 5-phospho-alpha-D-ribose 1-diphosphate (PRPP) to UMP and diphosphate. This is Uracil phosphoribosyltransferase from Exiguobacterium sibiricum (strain DSM 17290 / CCUG 55495 / CIP 109462 / JCM 13490 / 255-15).